A 169-amino-acid chain; its full sequence is Cell division inhibitor SulA (169 aa).

A disordered region spans residues 1 to 22; sequence MHTSIYANRSTSFSPSAGNDTQ. Residues 106-112 are ftsZ binding; that stretch reads ALRTGNY. Residues 162-169 are lon protease binding; sequence KIHSNLYH.

The protein belongs to the SulA family. In terms of assembly, interacts with FtsZ. In terms of processing, is rapidly cleaved and degraded by the Lon protease once DNA damage is repaired.

Its function is as follows. Component of the SOS system and an inhibitor of cell division. Accumulation of SulA causes rapid cessation of cell division and the appearance of long, non-septate filaments. In the presence of GTP, binds a polymerization-competent form of FtsZ in a 1:1 ratio, thus inhibiting FtsZ polymerization and therefore preventing it from participating in the assembly of the Z ring. This mechanism prevents the premature segregation of damaged DNA to daughter cells during cell division. This Enterobacter sp. (strain 638) protein is Cell division inhibitor SulA.